A 446-amino-acid polypeptide reads, in one-letter code: Glutamine synthetase (446 aa).

Residues 14–106 (NNVKFIRFQF…VICDVYTTNG (93 aa)) form the GS beta-grasp domain. The GS catalytic domain occupies 113-446 (PRGCLKRVLA…DWETKQYLKI (334 aa)). Residues Glu-137 and Glu-139 each coordinate Mg(2+). ATP is bound at residue Glu-187. Mg(2+) is bound by residues Glu-192 and Glu-199. L-glutamate contacts are provided by residues 243–244 (NG) and Gly-244. His-248 lines the Mg(2+) pocket. ATP is bound by residues 250–252 (HQS) and Ser-252. The L-glutamate site is built by Arg-301, Glu-307, and Arg-319. Residues Arg-319, Arg-324, and Lys-331 each coordinate ATP. Residue Glu-336 participates in Mg(2+) binding. Arg-338 serves as a coordination point for L-glutamate.

The protein belongs to the glutamine synthetase family. Oligomer of 12 subunits arranged in the form of two hexagons. Mg(2+) serves as cofactor.

The protein localises to the cytoplasm. The catalysed reaction is L-glutamate + NH4(+) + ATP = L-glutamine + ADP + phosphate + H(+). Probably involved in nitrogen metabolism via ammonium assimilation. Catalyzes the ATP-dependent biosynthesis of glutamine from glutamate and ammonia. The chain is Glutamine synthetase from Methanococcus maripaludis (strain DSM 14266 / JCM 13030 / NBRC 101832 / S2 / LL).